The chain runs to 353 residues: S-adenosylmethionine:tRNA ribosyltransferase-isomerase (353 aa).

The protein belongs to the QueA family. Monomer.

It is found in the cytoplasm. It carries out the reaction 7-aminomethyl-7-carbaguanosine(34) in tRNA + S-adenosyl-L-methionine = epoxyqueuosine(34) in tRNA + adenine + L-methionine + 2 H(+). It functions in the pathway tRNA modification; tRNA-queuosine biosynthesis. Its function is as follows. Transfers and isomerizes the ribose moiety from AdoMet to the 7-aminomethyl group of 7-deazaguanine (preQ1-tRNA) to give epoxyqueuosine (oQ-tRNA). This is S-adenosylmethionine:tRNA ribosyltransferase-isomerase from Nitrosomonas europaea (strain ATCC 19718 / CIP 103999 / KCTC 2705 / NBRC 14298).